The sequence spans 379 residues: MNKPRFNGTPVASLDSLSAMLGIERKRLDWIVKSVSMSYKQFKVETGKNKKERQIFEPKRSLKGIQKKINKEIFEKIDYPHYLHGALSGRDYISNAAVHTRKRTVICLDITNFYPSISKKDVCSIFKNLMRFSPDVSLCLTELVTLNNKVPQGGCCSSYIANLLFFNSEYNLYNRLKSMGLSYSRLLDDITISSDKDLSSEEKTKVIKLVHGMVNQYRLSINESKTTIEHSKDSSSKLSVTGLWVKHGVPKLTKENRRYIRYLVYICKKQGAYERHTKEYHDLWNRCSGKVAQMSRLGHVQAVELRAILSEIMPVYDDYKISKLKLMAKHYLNKFTPPLTDDQIRKIDRMLYDFDIVGRTNKNLAKLYRRKLVALLPDR.

Residues 1-245 (MNKPRFNGTP…SKLSVTGLWV (245 aa)) enclose the Reverse transcriptase domain. Aspartate 109, aspartate 188, and aspartate 189 together coordinate Mg(2+).

It belongs to the bacterial reverse transcriptase family.

The catalysed reaction is DNA(n) + a 2'-deoxyribonucleoside 5'-triphosphate = DNA(n+1) + diphosphate. Its function is as follows. Reverse transcriptase (RT) component of antiviral defense system retron Se72, composed of a non-coding RNA (ncRNA), this reverse transcriptase (RT) and the following cold shock-like protein. Expression of retron Se72 confers protection against bacteriophage lambda. At multiplicity of infection (MOI) of 0.02 cultures slow growth when infected with lambda but do not collapse, at MOI 2 cultures enter growth stasis. Responsible for synthesis of msDNA (a branched molecule with RNA linked by a 2',5'-phosphodiester bond to ssDNA). The retron transcript serves as primer (from a conserved internal G residue) and template for the reaction, and codes for the RT. The DNA segment is predicted to be 72 bases long. This is Retron Se72 reverse transcriptase from Salmonella heidelberg (strain 579083-10).